The following is a 219-amino-acid chain: Uracil-DNA glycosylase (219 aa).

Residue aspartate 61 is the Proton acceptor of the active site.

Belongs to the uracil-DNA glycosylase (UDG) superfamily. UNG family.

Its subcellular location is the cytoplasm. It catalyses the reaction Hydrolyzes single-stranded DNA or mismatched double-stranded DNA and polynucleotides, releasing free uracil.. Its function is as follows. Excises uracil residues from the DNA which can arise as a result of misincorporation of dUMP residues by DNA polymerase or due to deamination of cytosine. In Neisseria meningitidis serogroup B (strain ATCC BAA-335 / MC58), this protein is Uracil-DNA glycosylase.